A 475-amino-acid polypeptide reads, in one-letter code: MAELRTQPALGRIRQVHMVGIGGIGMSSIAEVLLNRGYDVTGSDLERSDVTERLEAEGATIHEGHAAEQVGTADVVVYSSAVDPDENPETREAERRRISLIPRAEMLGELIRMKFGVGVAGTHGKTTTTSMAGLVVAEGGFDPTVIVGGKVTAFGSNAITGEGDVLVIEADEYDRTFLRLTPSLAVITSIEEDHLDVYEDLAAIQASFTQYANSVPFFGAAILCLDDPNVQAIVGDVERRVVTYGTTRQAEVRGENVRREGMTTRFDVVVRGERLGTIELHVPGMHNVRNALAAVAVGQELEISFERVRDGLGTFTGVRRRFEKKGEVGGITVLDDYAHHPTEIEATLDAAHQGFPDRRVVAVFQPHMYSRTQNFMDEFACSFFNADMLVLTDVYGAREAPIEGVTGGRLAERAEQFGHRAVHYVPEKTDLPGRLQELVGPGDVVLMLGAGDIWRASEAFVELLENDGGTAIERD.

121–127 (GTHGKTT) provides a ligand contact to ATP.

The protein belongs to the MurCDEF family.

The protein resides in the cytoplasm. The catalysed reaction is UDP-N-acetyl-alpha-D-muramate + L-alanine + ATP = UDP-N-acetyl-alpha-D-muramoyl-L-alanine + ADP + phosphate + H(+). Its pathway is cell wall biogenesis; peptidoglycan biosynthesis. Cell wall formation. This chain is UDP-N-acetylmuramate--L-alanine ligase, found in Salinibacter ruber (strain DSM 13855 / M31).